Here is a 114-residue protein sequence, read N- to C-terminus: UPF0342 protein LSEI_1724 (114 aa).

The protein belongs to the UPF0342 family.

This chain is UPF0342 protein LSEI_1724, found in Lacticaseibacillus paracasei (strain ATCC 334 / BCRC 17002 / CCUG 31169 / CIP 107868 / KCTC 3260 / NRRL B-441) (Lactobacillus paracasei).